The following is a 252-amino-acid chain: 3-dehydroquinate dehydratase (252 aa).

Residues Ser-21, 46–48 (EWR), and Arg-82 contribute to the 3-dehydroquinate site. His-143 serves as the catalytic Proton donor/acceptor. Residue Lys-170 is the Schiff-base intermediate with substrate of the active site. 3-dehydroquinate is bound by residues Arg-213, Ser-232, and Gln-236.

It belongs to the type-I 3-dehydroquinase family. In terms of assembly, homodimer.

The catalysed reaction is 3-dehydroquinate = 3-dehydroshikimate + H2O. Its pathway is metabolic intermediate biosynthesis; chorismate biosynthesis; chorismate from D-erythrose 4-phosphate and phosphoenolpyruvate: step 3/7. Involved in the third step of the chorismate pathway, which leads to the biosynthesis of aromatic amino acids. Catalyzes the cis-dehydration of 3-dehydroquinate (DHQ) and introduces the first double bond of the aromatic ring to yield 3-dehydroshikimate. This Shigella dysenteriae serotype 1 (strain Sd197) protein is 3-dehydroquinate dehydratase.